Reading from the N-terminus, the 544-residue chain is GMP synthase [glutamine-hydrolyzing] (544 aa).

One can recognise a Glutamine amidotransferase type-1 domain in the interval 12-210; sequence TILILDFGSQ…VKNVCGVRDG (199 aa). Catalysis depends on cysteine 88, which acts as the Nucleophile. Catalysis depends on residues histidine 184 and glutamate 186. One can recognise a GMPS ATP-PPase domain in the interval 211 to 419; the sequence is WSMESFIPKE…LNIPEHLVGR (209 aa). Residue 239-245 participates in ATP binding; sequence SGGVDST. 4 residues coordinate XMP: arginine 312, aspartate 481, lysine 536, and glutamate 542.

Homodimer. Also forms a small population of homotetramers. Mg(2+) is required as a cofactor.

Its subcellular location is the cytoplasm. The protein resides in the cytosol. It catalyses the reaction XMP + L-glutamine + ATP + H2O = GMP + L-glutamate + AMP + diphosphate + 2 H(+). It participates in purine metabolism; GMP biosynthesis; GMP from XMP (L-Gln route): step 1/1. With respect to regulation, the enzyme is inhibited by ECC1385; although this compound fails to inhibit growth of the organism. Its function is as follows. Catalyzes the conversion of xanthine monophosphate (XMP) to GMP in the presence of glutamine and ATP through an adenyl-XMP intermediate. This chain is GMP synthase [glutamine-hydrolyzing], found in Cryptococcus neoformans var. grubii serotype A (strain H99 / ATCC 208821 / CBS 10515 / FGSC 9487) (Filobasidiella neoformans var. grubii).